The sequence spans 110 residues: MSEGSFEDRELEEIRRKKLEELQKKAELERQAQIVAAQRRIALKKILTPEALARLDNIRVVRPELAEALEQQLINLAATGRVRVPIDEETLKKILEAVYSQTRREYRFRL.

It belongs to the PDCD5 family.

The sequence is that of DNA-binding protein PAE3044 from Pyrobaculum aerophilum (strain ATCC 51768 / DSM 7523 / JCM 9630 / CIP 104966 / NBRC 100827 / IM2).